We begin with the raw amino-acid sequence, 249 residues long: Small ribosomal subunit protein uS2 (249 aa).

The protein belongs to the universal ribosomal protein uS2 family.

This chain is Small ribosomal subunit protein uS2, found in Listeria monocytogenes serovar 1/2a (strain ATCC BAA-679 / EGD-e).